A 214-amino-acid chain; its full sequence is Oxaloacetate tautomerase fahd-1, mitochondrial (214 aa).

E65, E67, and D96 together coordinate Mg(2+).

This sequence belongs to the FAH family. Mg(2+) is required as a cofactor. Requires Mn(2+) as cofactor. As to expression, widely expressed.

The protein resides in the mitochondrion. It carries out the reaction oxaloacetate = enol-oxaloacetate. Tautomerase that converts enol-oxaloacetate, a strong inhibitor of succinate dehydrogenase, to the physiological keto form of oxaloacetate. The polypeptide is Oxaloacetate tautomerase fahd-1, mitochondrial (Caenorhabditis elegans).